Reading from the N-terminus, the 525-residue chain is Putative ribose/galactose/methyl galactoside import ATP-binding protein (525 aa).

Residues 1–30 (MFGSATANPPAQRDLPSSDSDSPTPDAQPP) form a disordered region. Positions 14–25 (DLPSSDSDSPTP) are enriched in low complexity. ABC transporter domains lie at 33–269 (LEIS…VGRE) and 279–523 (KPPG…SGHK). 65–72 (GENGAGKS) serves as a coordination point for ATP.

The protein belongs to the ABC transporter superfamily. Carbohydrate importer 2 (CUT2) (TC 3.A.1.2) family.

The protein localises to the cell inner membrane. The catalysed reaction is D-ribose(out) + ATP + H2O = D-ribose(in) + ADP + phosphate + H(+). The enzyme catalyses D-galactose(out) + ATP + H2O = D-galactose(in) + ADP + phosphate + H(+). Functionally, part of an ABC transporter complex involved in carbohydrate import. Could be involved in ribose, galactose and/or methyl galactoside import. Responsible for energy coupling to the transport system. The chain is Putative ribose/galactose/methyl galactoside import ATP-binding protein from Pseudomonas savastanoi pv. phaseolicola (strain 1448A / Race 6) (Pseudomonas syringae pv. phaseolicola (strain 1448A / Race 6)).